The sequence spans 189 residues: MWKNGAMRGCNKETGEFLGPSRSQQRRTALEVLVLSEKLAALTPAQLAKLPIPERLLPHITETKRITSHIARKRQLAFLAKQMRREDDTTLEAIREKLNASGIQAQREVATLHRTEQWRKRLLEEGDSALTELLNQYPQADCGKLRQLLRNSKTEQARNKAPQAFRELYQVLHGLIITQNSDNQHQTPQ.

The tract at residues 1-22 (MWKNGAMRGCNKETGEFLGPSR) is disordered.

It belongs to the DarP family.

The protein resides in the cytoplasm. Its function is as follows. Member of a network of 50S ribosomal subunit biogenesis factors which assembles along the 30S-50S interface, preventing incorrect 23S rRNA structures from forming. Promotes peptidyl transferase center (PTC) maturation. The sequence is that of Dual-action ribosomal maturation protein DarP from Xylella fastidiosa (strain Temecula1 / ATCC 700964).